Reading from the N-terminus, the 549-residue chain is Probable protein kinase UbiB (549 aa).

The Protein kinase domain maps to 123–501 (DFNETPLASA…QQQAHKSNYL (379 aa)). Residues 129-137 (LASASISQV) and Lys-152 each bind ATP. The Proton acceptor role is filled by Asp-287. 2 helical membrane-spanning segments follow: residues 498–518 (SNYL…LFNQ) and 520–540 (ATLW…IIGW).

Belongs to the ABC1 family. UbiB subfamily.

It is found in the cell inner membrane. The protein operates within cofactor biosynthesis; ubiquinone biosynthesis [regulation]. In terms of biological role, is probably a protein kinase regulator of UbiI activity which is involved in aerobic coenzyme Q (ubiquinone) biosynthesis. The polypeptide is Probable protein kinase UbiB (Shewanella sp. (strain MR-7)).